The sequence spans 306 residues: Methionyl-tRNA formyltransferase (306 aa).

110 to 113 (SLLP) serves as a coordination point for (6S)-5,6,7,8-tetrahydrofolate.

This sequence belongs to the Fmt family.

It carries out the reaction L-methionyl-tRNA(fMet) + (6R)-10-formyltetrahydrofolate = N-formyl-L-methionyl-tRNA(fMet) + (6S)-5,6,7,8-tetrahydrofolate + H(+). Functionally, attaches a formyl group to the free amino group of methionyl-tRNA(fMet). The formyl group appears to play a dual role in the initiator identity of N-formylmethionyl-tRNA by promoting its recognition by IF2 and preventing the misappropriation of this tRNA by the elongation apparatus. The chain is Methionyl-tRNA formyltransferase from Brucella anthropi (strain ATCC 49188 / DSM 6882 / CCUG 24695 / JCM 21032 / LMG 3331 / NBRC 15819 / NCTC 12168 / Alc 37) (Ochrobactrum anthropi).